The chain runs to 149 residues: MADQLTEEQIAEFKEAFSLFDKDGDGTITTKELGTVMRSLGQNPTEAELQDMINEVDADGNGTIDFPEFLTMMARKMKDTDSEEEIREAFRVFDKDGNGYISAAELRHVMTNLGEKLTDEEVDEMIREADIDGDGQVNYEEFVQMMTAK.

Position 2 is an N-acetylalanine (Ala2). 4 consecutive EF-hand domains span residues 8–43, 44–79, 81–116, and 117–149; these read EQIAEFKEAFSLFDKDGDGTITTKELGTVMRSLGQN, PTEAELQDMINEVDADGNGTIDFPEFLTMMARKMKD, DSEEEIREAFRVFDKDGNGYISAAELRHVMTNLGEK, and LTDEEVDEMIREADIDGDGQVNYEEFVQMMTAK. Asp21 contacts Ca(2+). An N6-acetyllysine; alternate modification is found at Lys22. Lys22 is covalently cross-linked (Glycyl lysine isopeptide (Lys-Gly) (interchain with G-Cter in SUMO2); alternate). Residue Lys22 forms a Glycyl lysine isopeptide (Lys-Gly) (interchain with G-Cter in ubiquitin); alternate linkage. 4 residues coordinate Ca(2+): Asp23, Asp25, Thr27, and Glu32. Thr45 carries the post-translational modification Phosphothreonine; by CaMK4. Ca(2+)-binding residues include Asp57, Asp59, Asn61, Thr63, and Glu68. A necessary and sufficient for interaction with PCP4 region spans residues 77 to 149; that stretch reads MKDTDSEEEI…EEFVQMMTAK (73 aa). Residue Ser82 is modified to Phosphoserine. Position 94 (Asp94) interacts with Ca(2+). Lys95 carries the N6-acetyllysine modification. Ca(2+) is bound by residues Asp96, Asn98, and Tyr100. The residue at position 100 (Tyr100) is a Phosphotyrosine. Ser102 bears the Phosphoserine mark. Glu105 contacts Ca(2+). A Phosphothreonine modification is found at Thr111. An N6,N6,N6-trimethyllysine; alternate modification is found at Lys116. Lys116 is subject to N6-methyllysine; alternate. Residues Asp130, Asp132, Asp134, and Gln136 each coordinate Ca(2+). A Phosphotyrosine modification is found at Tyr139. Glu141 is a binding site for Ca(2+).

It belongs to the calmodulin family. Homotetramer. Interacts with MYO1C, MYO5A and RRAD. Interacts with MYO10. Interacts with CEP97, CCP110, TTN/titin and SRY. Interacts with USP6; the interaction is calcium dependent. Interacts with CDK5RAP2. Interacts with SCN5A. Interacts with RYR1. Interacts with FCHO1. Interacts with MIP in a 1:2 stoichiometry; the interaction with the cytoplasmic domains from two MIP subunits promotes MIP water channel closure. Interacts with ORAI1; this may play a role in the regulation of ORAI1-mediated calcium transport. Interacts with IQCF1. Interacts with SYT7. Interacts with CEACAM1 (via cytoplasmic domain); this interaction is in a calcium dependent manner and reduces homophilic cell adhesion through dissociation of dimer. Interacts with RYR2; regulates RYR2 calcium-release channel activity. Interacts with PCP4; regulates calmodulin calcium-binding. Interacts with the heterotetrameric KCNQ2 and KCNQ3 channel; the interaction is calcium-independent, constitutive and participates in the proper assembly of a functional heterotetrameric M channel. Interacts with alpha-synuclein/SNCA. Interacts with SLC9A1 in a calcium-dependent manner. In the absence of Ca(+2), interacts with GIMAP4 (via IQ domain). Interacts with SCN8A; the interaction modulates the inactivation rate of SCN8A. Interaction with KIF1A; the interaction is increased in presence of calcium and increases neuronal dense core vesicles motility. Interacts with KCNN3. Interacts with KCNQ1 (via C-terminus); forms a heterooctameric structure (with 4:4 KCNQ1:CALM stoichiometry) in a calcium-independent manner. Interacts with PIK3C3; the interaction modulates PIK3C3 kinase activity. Interacts with HINT1; interaction increases in the presence of calcium ions. Interacts with HINT3. Interacts with GARIN2; in mature sperm flagella. Interacts with IQUB. Interacts with SLC26A5 (via STAS domain); this interaction is calcium-dependent and the STAS domain interacts with only one lobe of CALM which is an elongated conformation. Ca(2+)-bound CALM1 binds CNGA1:CNGB1 channel (via CaM1 and CaM2 regions); this interaction modulates the affinity of the channel for cNMPs in response to intracellular Ca(2+) levels. Interacts with ITPR1; this interaction inhibits inositol 1,4,5 trisphosphate binding in both the presence and absence of calcium and 1,4,5 trisphosphate-induced calcium release in the presence of calcium. Component of the SIFI complex. Interacts with KCNN4; this interaction allows channel opening. Interacts with KCNN2; this interaction regulates the channel activity through calcium-binding. In terms of assembly, (Microbial infection) Interacts with Rubella virus protease/methyltransferase p150. As to quaternary structure, (Microbial infection) Interacts with Legionella pneumophila glutamylase SidJ. (Microbial infection) Interacts with C.violaceum CopC. C.violaceum CopC interacts specifically with the apo form of calmodulin. In terms of assembly, (Microbial infection) Interacts with S.flexneri OspC1 and OspC3. S.flexneri OspC1 and OspC3 interact specifically with the apo form of calmodulin and prevents calcium-binding. Post-translationally, ubiquitination results in a strongly decreased activity. Phosphorylation results in a decreased activity.

The protein localises to the cytoplasm. It localises to the cytoskeleton. Its subcellular location is the spindle. It is found in the spindle pole. The protein resides in the microtubule organizing center. The protein localises to the centrosome. It localises to the cell projection. Its subcellular location is the cilium. It is found in the flagellum. Its activity is regulated as follows. (Microbial infection) Inactivated by S.flexneri OspC1 and OspC3 proteins, which specifically bind the apo-form of calmodulin, thereby preventing calcium-binding and activity. Functionally, calmodulin acts as part of a calcium signal transduction pathway by mediating the control of a large number of enzymes, ion channels, aquaporins and other proteins through calcium-binding. Calcium-binding is required for the activation of calmodulin. Among the enzymes to be stimulated by the calmodulin-calcium complex are a number of protein kinases, such as myosin light-chain kinases and calmodulin-dependent protein kinase type II (CaMK2), and phosphatases. Together with CCP110 and centrin, is involved in a genetic pathway that regulates the centrosome cycle and progression through cytokinesis. Is a regulator of voltage-dependent L-type calcium channels. Mediates calcium-dependent inactivation of CACNA1C. Positively regulates calcium-activated potassium channel activity of KCNN2. Forms a potassium channel complex with KCNQ1 and regulates electrophysiological activity of the channel via calcium-binding. Acts as a sensor to modulate the endoplasmic reticulum contacts with other organelles mediated by VMP1:ATP2A2. (Microbial infection) Required for Legionella pneumophila SidJ glutamylase activity. In terms of biological role, (Microbial infection) Required for C.violaceum CopC and S.flexneri OspC3 arginine ADP-riboxanase activity. The protein is Calmodulin-1 of Homo sapiens (Human).